The following is a 472-amino-acid chain: Glutamate--tRNA ligase (472 aa).

Positions 18 to 28 (PSPTGYLHIGG) match the 'HIGH' region motif. Residues 122–138 (RARGEKPRYDGRWRPEP) show a composition bias toward basic and acidic residues. The disordered stretch occupies residues 122 to 150 (RARGEKPRYDGRWRPEPGKTLPVPPSGVQ). Positions 250–254 (KLSKR) match the 'KMSKS' region motif. An ATP-binding site is contributed by K253.

Belongs to the class-I aminoacyl-tRNA synthetase family. Glutamate--tRNA ligase type 1 subfamily. In terms of assembly, monomer.

The protein localises to the cytoplasm. It carries out the reaction tRNA(Glu) + L-glutamate + ATP = L-glutamyl-tRNA(Glu) + AMP + diphosphate. Its function is as follows. Catalyzes the attachment of glutamate to tRNA(Glu) in a two-step reaction: glutamate is first activated by ATP to form Glu-AMP and then transferred to the acceptor end of tRNA(Glu). This is Glutamate--tRNA ligase from Thiobacillus denitrificans (strain ATCC 25259 / T1).